Reading from the N-terminus, the 542-residue chain is Serine/threonine-protein phosphatase 2A regulatory subunit pptr-1 (542 aa).

Disordered regions lie at residues 1–28 (MHGS…TGGQ) and 500–542 (DYLK…PAKK). Positions 528–542 (KKSSTGSETTTPAKK) are enriched in polar residues.

It belongs to the phosphatase 2A regulatory subunit B56 family. As to quaternary structure, part of a complex consisting of a common heterodimeric core enzyme, composed of catalytic subunit let-92 and constant regulatory subunit paa-1, that associates with a variety of regulatory subunits which confer distinct properties to the holoenzyme. Interacts with akt-1 but not akt-2. Interacts with sgk-1. Interacts with P granule components meg-1, meg-3 and meg-4. As to expression, expressed in pharynx, vulva and spermatheca.

It localises to the cytoplasm. Its function is as follows. Probable regulatory subunit of serine/threonine-protein phosphatase let-92 which negatively regulates the insulin receptor signaling cascade composed of daf-2, age-1, akt-1, akt-2 and sgk-1 by promoting the dephosphorylation of akt-1 on 'Thr-350'. Negatively regulates several functions controlled by the insulin pathway including dauer formation, lifespan, fat storage and stress resistance. Plays a role in the asymmetric segregation of the P granule components during embryonic cell divisions but does not play an essential role in specifying germ cell fate. Within a PP2A phosphatase complex, acts redundantly with pptr-2, to dephosphorylate P granule components including meg-1 and meg-3 to promote the assembly and accumulation of zygotic P granules in the posterior cytoplasm during zygote polarization, and thus maintain P granule distribution and segregation in early stage embryos following meiosis. In adults, required to promote germ cell proliferation and differentiation when exposed to thermic stress. The sequence is that of Serine/threonine-protein phosphatase 2A regulatory subunit pptr-1 from Caenorhabditis elegans.